The primary structure comprises 208 residues: Casparian strip membrane protein 2 (208 aa).

The segment at 1–23 (MDSKSGRSESAINIPESNSTKHK) is disordered. The Cytoplasmic segment spans residues 1 to 46 (MDSKSGRSESAINIPESNSTKHKSTVVHTATKVAAVAPRGGGWRRG). The span at 8-18 (SESAINIPESN) shows a compositional bias: polar residues. A helical transmembrane segment spans residues 47–67 (VSIFDFILRICALAAALAATA). Residues 68-96 (TMGTTDQTLPFFTQFFQFQASYDDLPAFT) lie on the Extracellular side of the membrane. A helical membrane pass occupies residues 97–117 (FFVVANGIASGYLVLSLPFSI). The Cytoplasmic segment spans residues 118–129 (ATIVRPHAAAIK). A helical membrane pass occupies residues 130–150 (LLLIIFDTVMVAFTAAAAAAA). Residues 151 to 184 (AAIVYLAHNGNSKTNWFAICQQFNDFCQRVSGAV) lie on the Extracellular side of the membrane. The helical transmembrane segment at 185 to 205 (VASFVAAVILIFLVVLSAVAI) threads the bilayer. Over 206 to 208 (RKH) the chain is Cytoplasmic.

Belongs to the Casparian strip membrane proteins (CASP) family. Homodimer and heterodimers.

It localises to the cell membrane. In terms of biological role, regulates membrane-cell wall junctions and localized cell wall deposition. Required for establishment of the Casparian strip membrane domain (CSD) and the subsequent formation of Casparian strips, a cell wall modification of the root endodermis that determines an apoplastic barrier between the intraorganismal apoplasm and the extraorganismal apoplasm and prevents lateral diffusion. This Triphysaria pusilla (Dwarf owl's-clover) protein is Casparian strip membrane protein 2.